A 250-amino-acid chain; its full sequence is Uracil-DNA glycosylase (250 aa).

D78 serves as the catalytic Proton acceptor. A disordered region spans residues 228–250; sequence RGQKPVDWSGEQNNASRQGEFAL.

This sequence belongs to the uracil-DNA glycosylase (UDG) superfamily. UNG family.

It is found in the cytoplasm. It catalyses the reaction Hydrolyzes single-stranded DNA or mismatched double-stranded DNA and polynucleotides, releasing free uracil.. In terms of biological role, excises uracil residues from the DNA which can arise as a result of misincorporation of dUMP residues by DNA polymerase or due to deamination of cytosine. This Bordetella pertussis (strain Tohama I / ATCC BAA-589 / NCTC 13251) protein is Uracil-DNA glycosylase.